The following is a 282-amino-acid chain: Undecaprenyl-diphosphatase (282 aa).

8 consecutive transmembrane segments (helical) span residues 7-29 (VLFA…HVVI), 45-65 (FLPF…LYFW), 89-109 (GLLL…FALK), 115-135 (LFAS…VLII), 153-173 (LTLR…LPGL), 196-216 (FAFL…VPHL), 229-249 (TALL…AFLM), and 258-278 (WALG…LILI).

It belongs to the UppP family.

The protein localises to the cell inner membrane. It carries out the reaction di-trans,octa-cis-undecaprenyl diphosphate + H2O = di-trans,octa-cis-undecaprenyl phosphate + phosphate + H(+). Functionally, catalyzes the dephosphorylation of undecaprenyl diphosphate (UPP). Confers resistance to bacitracin. This Acidiphilium cryptum (strain JF-5) protein is Undecaprenyl-diphosphatase.